The sequence spans 183 residues: Adenine phosphoribosyltransferase (183 aa).

Belongs to the purine/pyrimidine phosphoribosyltransferase family. As to quaternary structure, homodimer.

The protein localises to the cytoplasm. The enzyme catalyses AMP + diphosphate = 5-phospho-alpha-D-ribose 1-diphosphate + adenine. The protein operates within purine metabolism; AMP biosynthesis via salvage pathway; AMP from adenine: step 1/1. In terms of biological role, catalyzes a salvage reaction resulting in the formation of AMP, that is energically less costly than de novo synthesis. This chain is Adenine phosphoribosyltransferase, found in Klebsiella pneumoniae (strain 342).